The following is a 343-amino-acid chain: Anthranilate phosphoribosyltransferase (343 aa).

Residues G81, 84 to 85 (GD), 91 to 94 (NLST), 109 to 117 (KHGNRSVSS), and S121 contribute to the 5-phospho-alpha-D-ribose 1-diphosphate site. G81 is a binding site for anthranilate. A Mg(2+)-binding site is contributed by S93. N112 provides a ligand contact to anthranilate. R167 contacts anthranilate. The Mg(2+) site is built by D226 and E227.

The protein belongs to the anthranilate phosphoribosyltransferase family. In terms of assembly, homodimer. It depends on Mg(2+) as a cofactor.

The enzyme catalyses N-(5-phospho-beta-D-ribosyl)anthranilate + diphosphate = 5-phospho-alpha-D-ribose 1-diphosphate + anthranilate. It participates in amino-acid biosynthesis; L-tryptophan biosynthesis; L-tryptophan from chorismate: step 2/5. In terms of biological role, catalyzes the transfer of the phosphoribosyl group of 5-phosphorylribose-1-pyrophosphate (PRPP) to anthranilate to yield N-(5'-phosphoribosyl)-anthranilate (PRA). The chain is Anthranilate phosphoribosyltransferase from Cellvibrio japonicus (strain Ueda107) (Pseudomonas fluorescens subsp. cellulosa).